A 184-amino-acid polypeptide reads, in one-letter code: Probable cobalt-precorrin-6B C(15)-methyltransferase (decarboxylating) (184 aa).

Residues Thr-12, 36 to 40 (GCGTG), Asp-59, and Ala-87 contribute to the S-adenosyl-L-methionine site.

It belongs to the methyltransferase superfamily. Archaeal-type CbiT family.

It carries out the reaction Co-precorrin-6B + S-adenosyl-L-methionine = Co-precorrin-7 + S-adenosyl-L-homocysteine + CO2. It participates in cofactor biosynthesis; adenosylcobalamin biosynthesis; cob(II)yrinate a,c-diamide from sirohydrochlorin (anaerobic route): step 8/10. In terms of biological role, catalyzes the methylation of C-15 in cobalt-precorrin-6B followed by the decarboxylation of C-12 to form cobalt-precorrin-7. The protein is Probable cobalt-precorrin-6B C(15)-methyltransferase (decarboxylating) of Methanosarcina acetivorans (strain ATCC 35395 / DSM 2834 / JCM 12185 / C2A).